Reading from the N-terminus, the 146-residue chain is Large-conductance mechanosensitive channel (146 aa).

3 consecutive transmembrane segments (helical) span residues 21–41 (VGII…ADLI), 44–64 (IIGL…LGDG), and 83–103 (GSFI…FLLV).

It belongs to the MscL family. In terms of assembly, homopentamer.

Its subcellular location is the cell inner membrane. Channel that opens in response to stretch forces in the membrane lipid bilayer. May participate in the regulation of osmotic pressure changes within the cell. The sequence is that of Large-conductance mechanosensitive channel from Cereibacter sphaeroides (strain ATCC 17023 / DSM 158 / JCM 6121 / CCUG 31486 / LMG 2827 / NBRC 12203 / NCIMB 8253 / ATH 2.4.1.) (Rhodobacter sphaeroides).